We begin with the raw amino-acid sequence, 375 residues long: Chaperone protein DnaJ (375 aa).

A J domain is found at 5–70 (DYYEVLGVAR…NKRRAYDAHG (66 aa)). Residues 131–208 (GIERRIEIPT…CHGAGRVEED (78 aa)) form a CR-type zinc finger. Cys144, Cys147, Cys160, Cys163, Cys182, Cys185, Cys196, and Cys199 together coordinate Zn(2+). CXXCXGXG motif repeat units lie at residues 144 to 151 (CAPCHGSG), 160 to 167 (CGTCHGRG), 182 to 189 (CPHCDGRG), and 196 to 203 (CKTCHGAG).

Belongs to the DnaJ family. Homodimer. Zn(2+) serves as cofactor.

It is found in the cytoplasm. Its function is as follows. Participates actively in the response to hyperosmotic and heat shock by preventing the aggregation of stress-denatured proteins and by disaggregating proteins, also in an autonomous, DnaK-independent fashion. Unfolded proteins bind initially to DnaJ; upon interaction with the DnaJ-bound protein, DnaK hydrolyzes its bound ATP, resulting in the formation of a stable complex. GrpE releases ADP from DnaK; ATP binding to DnaK triggers the release of the substrate protein, thus completing the reaction cycle. Several rounds of ATP-dependent interactions between DnaJ, DnaK and GrpE are required for fully efficient folding. Also involved, together with DnaK and GrpE, in the DNA replication of plasmids through activation of initiation proteins. This is Chaperone protein DnaJ from Xanthomonas euvesicatoria pv. vesicatoria (strain 85-10) (Xanthomonas campestris pv. vesicatoria).